We begin with the raw amino-acid sequence, 654 residues long: Endoplasmic reticulum chaperone BiP (654 aa).

A signal peptide spans Met-1–Ala-18. The required for interaction with ELAPOR1 stretch occupies residues Met-1–Ala-80. Position 36–39 (Gly-36–Tyr-39) interacts with ATP. A Phosphoserine modification is found at Ser-86. An ATP-binding site is contributed by Lys-96. Position 125 is an N6-acetyllysine (Lys-125). The nucleotide-binding (NBD) stretch occupies residues Lys-125–Lys-280. Tyr-160 carries the post-translational modification 3'-nitrotyrosine. Lys-213 bears the N6-acetyllysine mark. Position 227–229 (Gly-227–Thr-229) interacts with ATP. At Lys-271 the chain carries N6-acetyllysine. Glu-293–Ser-300 lines the ATP pocket. Lys-326 carries the post-translational modification N6-acetyllysine. Lys-352 participates in a covalent cross-link: Glycyl lysine isopeptide (Lys-Gly) (interchain with G-Cter in SUMO2). At Lys-353 the chain carries N6-acetyllysine; alternate. Lys-353 is covalently cross-linked (Glycyl lysine isopeptide (Lys-Gly) (interchain with G-Cter in SUMO1); alternate). Gly-364–Arg-367 is an ATP binding site. The tract at residues Gln-409–Val-419 is interdomain linker. Positions Cys-420–Thr-500 are substrate-binding (SBD). Lys-447 carries the N6-succinyllysine modification. Residue Arg-492 is modified to Omega-N-methylarginine. Thr-518 carries the O-AMP-threonine; alternate modification. At Thr-518 the chain carries Phosphothreonine; alternate. Lys-585 carries the post-translational modification N6,N6,N6-trimethyllysine; by METTL21A; in vitro. N6,N6-dimethyllysine; alternate is present on Lys-585. Lys-585 carries the post-translational modification N6-methyllysine; alternate. At Lys-591 the chain carries N6-methyllysine. Positions Ser-632–Leu-654 are disordered. Residues Thr-643 and Thr-648 each carry the phosphothreonine modification. Residues Gly-644–Leu-654 are compositionally biased toward acidic residues. Phosphoserine is present on Ser-649. A Prevents secretion from ER motif is present at residues Arg-651–Leu-654.

The protein belongs to the heat shock protein 70 family. In terms of assembly, monomer and homooligomer; homooligomerization via the interdomain linker inactivates the chaperone activity and acts as a storage of HSPA5/BiP molecules. Interacts with DNAJC1 (via J domain). Component of an EIF2 complex at least composed of CELF1/CUGBP1, CALR, CALR3, EIF2S1, EIF2S2, HSP90B1 and HSPA5. Part of a large chaperone multiprotein complex comprising DNAJB11, HSP90B1, HSPA5, HYOU, PDIA2, PDIA4, PDIA6, PPIB, SDF2L1, UGGT1 and very small amounts of ERP29, but not, or at very low levels, CALR nor CANX. Interacts with TMEM132A and TRIM21. May form a complex with ERLEC1, OS9, SEL1L and SYVN1. Interacts with DNAJC10. Interacts with DNAJB9/ERdj4; leading to recruit HSPA5/BiP to ERN1/IRE1. Interacts with ERN1/IRE1 (via luminal domain); the interaction takes place following interaction with DNAJB9/ERdj4 and leads to inactivate ERN1/IRE1, the interaction also competitively inhibits ERN1 interaction with MANF. Interacts directly with MANF (via SAP domain); the interaction inhibits ATP binding to HSPA5/BiP and subsequent nucleotide exchange. Interacts with EIF2AK3/PERK (via luminal domain); interaction leads to inactivate EIF2AK3/PERK. Interacts with MX1. Interacts with METTL23. Interacts with CEMIP; the interaction induces calcium leakage from the endoplasmic reticulum and cell migration. Interacts with PCSK4 form; the interaction takes place in the endoplasmic reticulum. Interacts with CIPC. Interacts with CCDC88B (via C-terminus); the interaction opposes ERN1-mediated JNK activation, protecting against apoptosis. Interacts with INPP5K; necessary for INPP5K localization at the endoplasmic reticulum. Interacts with MANF; the interaction is direct. Interacts with LOXL2; leading to activate the ERN1/IRE1-XBP1 pathway of the unfolded protein response. Interacts with CLU under stressed condition; interaction increases CLU protein stability; facilitates its retrotranslocation and redistribution to the mitochondria; cooperatively suppress stress-induced apoptosis by stabilizing mitochondrial membrane integrity. Interacts with CCDC47. Interacts with CLN3. Interacts with ELAPOR1; may regulate the function of HSPA5 in apoptosis and cell proliferation. Interacts with CASP7. Interacts with ILDR2; the interaction stabilizes ILDR2 expression. Interacts with ADAM7. Post-translationally, in unstressed cells, AMPylation at Thr-518 by FICD inactivates the chaperome activity: AMPylated form is locked in a relatively inert state and only weakly stimulated by J domain-containing proteins. In response to endoplasmic reticulum stress, de-AMPylation by the same protein, FICD, restores the chaperone activity.

It is found in the endoplasmic reticulum lumen. Its subcellular location is the melanosome. The protein localises to the cytoplasm. It localises to the cell surface. It carries out the reaction ATP + H2O = ADP + phosphate + H(+). With respect to regulation, the chaperone activity is regulated by ATP-induced allosteric coupling of the nucleotide-binding (NBD) and substrate-binding (SBD) domains. In the ADP-bound and nucleotide-free (apo) states, the two domains have little interaction. In contrast, in the ATP-bound state the two domains are tightly coupled, which results in drastically accelerated kinetics in both binding and release of polypeptide substrates. J domain-containing co-chaperones (DNAJB9/ERdj4 or DNAJC10/ERdj5) stimulate the ATPase activity and are required for efficient substrate recognition by HSPA5/BiP. Homooligomerization inactivates participating HSPA5/BiP protomers and probably act as reservoirs to store HSPA5/BiP molecules when they are not needed by the cell. Its function is as follows. Endoplasmic reticulum chaperone that plays a key role in protein folding and quality control in the endoplasmic reticulum lumen. Involved in the correct folding of proteins and degradation of misfolded proteins via its interaction with DNAJC10/ERdj5, probably to facilitate the release of DNAJC10/ERdj5 from its substrate. Acts as a key repressor of the EIF2AK3/PERK and ERN1/IRE1-mediated unfolded protein response (UPR). In the unstressed endoplasmic reticulum, recruited by DNAJB9/ERdj4 to the luminal region of ERN1/IRE1, leading to disrupt the dimerization of ERN1/IRE1, thereby inactivating ERN1/IRE1. Also binds and inactivates EIF2AK3/PERK in unstressed cells. Accumulation of misfolded protein in the endoplasmic reticulum causes release of HSPA5/BiP from ERN1/IRE1 and EIF2AK3/PERK, allowing their homodimerization and subsequent activation. Plays an auxiliary role in post-translational transport of small presecretory proteins across endoplasmic reticulum (ER). May function as an allosteric modulator for SEC61 channel-forming translocon complex, likely cooperating with SEC62 to enable the productive insertion of these precursors into SEC61 channel. Appears to specifically regulate translocation of precursors having inhibitory residues in their mature region that weaken channel gating. May also play a role in apoptosis and cell proliferation. The protein is Endoplasmic reticulum chaperone BiP of Ictidomys tridecemlineatus (Thirteen-lined ground squirrel).